Reading from the N-terminus, the 311-residue chain is Mycothiol acetyltransferase (311 aa).

1D-myo-inositol 2-(L-cysteinylamino)-2-deoxy-alpha-D-glucopyranoside is bound at residue Glu35. 79–81 (LVV) provides a ligand contact to acetyl-CoA. In terms of domain architecture, N-acetyltransferase spans 155–311 (VRTYVGTVDD…TAYALARIDD (157 aa)). 1D-myo-inositol 2-(L-cysteinylamino)-2-deoxy-alpha-D-glucopyranoside contacts are provided by Glu180, Lys225, and Glu235. Acetyl-CoA-binding positions include 239 to 241 (LGV) and 246 to 252 (QGRGLGQ). Tyr278 is a binding site for 1D-myo-inositol 2-(L-cysteinylamino)-2-deoxy-alpha-D-glucopyranoside. 283 to 288 (NVAAAR) is a binding site for acetyl-CoA.

It belongs to the acetyltransferase family. MshD subfamily. As to quaternary structure, monomer.

The enzyme catalyses 1D-myo-inositol 2-(L-cysteinylamino)-2-deoxy-alpha-D-glucopyranoside + acetyl-CoA = mycothiol + CoA + H(+). Catalyzes the transfer of acetyl from acetyl-CoA to desacetylmycothiol (Cys-GlcN-Ins) to form mycothiol. The chain is Mycothiol acetyltransferase from Mycobacterium leprae (strain Br4923).